The sequence spans 842 residues: Translation initiation factor IF-2 (842 aa).

Disordered stretches follow at residues 42 to 91 (ETKR…NLSS) and 139 to 253 (LQKQ…NQEP). Basic and acidic residues-rich tracts occupy residues 176–190 (IEKRKIDENQEEERH) and 199–214 (SEIRAPKIVKGADERR). The tr-type G domain maps to 340-509 (PRPPVVTIMG…LLQAEMLDLK (170 aa)). The interval 349 to 356 (GHVDHGKT) is G1. A GTP-binding site is contributed by 349 to 356 (GHVDHGKT). The G2 stretch occupies residues 374-378 (GITQH). The tract at residues 395–398 (DTPG) is G3. GTP contacts are provided by residues 395-399 (DTPGH) and 449-452 (NKID). Residues 449-452 (NKID) form a G4 region. A G5 region spans residues 485–487 (SAK).

Belongs to the TRAFAC class translation factor GTPase superfamily. Classic translation factor GTPase family. IF-2 subfamily.

The protein localises to the cytoplasm. One of the essential components for the initiation of protein synthesis. Protects formylmethionyl-tRNA from spontaneous hydrolysis and promotes its binding to the 30S ribosomal subunits. Also involved in the hydrolysis of GTP during the formation of the 70S ribosomal complex. This chain is Translation initiation factor IF-2, found in Bartonella tribocorum (strain CIP 105476 / IBS 506).